The sequence spans 2116 residues: Myosin-2 heavy chain (2116 aa).

A Myosin N-terminal SH3-like domain is found at 30 to 82; the sequence is SDKRYIWYNPDPKERDSYECGEIVSETSDSFTFKTVDGQDRQVKKDDANQRNP. Positions 86–759 constitute a Myosin motor domain; the sequence is DGVEDMSELS…QLARIEEARE (674 aa). N6,N6-dimethyllysine is present on K130. 179 to 186 serves as a coordination point for ATP; that stretch reads GESGAGKT. Actin-binding stretches follow at residues 638 to 660 and 738 to 752; these read LASLMATLETTNPHFVRCIIPNN and RFGITKIFFRAGQLA. An IQ domain is found at 762-791; the sequence is ISEIIKAIQAATRGWIARKVYKQAREHTVA. Positions 817-2116 form a coiled coil; that stretch reads ARPLLKRRNF…MADFFGGFKA (1300 aa). Disordered stretches follow at residues 1295–1314, 1363–1399, 1415–1444, 1711–1731, 1771–1791, and 1805–1844; these read VNEQLEEEKKQKESNEKRKV, DKSVEQLKTLQAKNEELRNTAEEAEGQLDRAERSKKK, TAKKVKAEKAMKKAETDYRSTKSELDDAKN, VRDQLEEEEDSRSELEDSKRR, LEDEKKKLNESERAKKRLESE, and NRSRAEKDRKKYEKDLKDTKYKLNDEAATKTQTEIGAAKL. Basic and acidic residues-rich tracts occupy residues 1375 to 1399, 1415 to 1443, and 1722 to 1731; these read KNEELRNTAEEAEGQLDRAERSKKK, TAKKVKAEKAMKKAETDYRSTKSELDDAK, and RSELEDSKRR. Positions 1805–1832 are enriched in basic and acidic residues; that stretch reads NRSRAEKDRKKYEKDLKDTKYKLNDEAA. 3 positions are modified to phosphothreonine; by MHCK: T1823, T1833, and T2029.

Belongs to the TRAFAC class myosin-kinesin ATPase superfamily. Myosin family. As to quaternary structure, myosin-2 heavy chain is two-headed. It self-assembles into filaments. Hexamer of 2 heavy chain subunits (MHC), 2 alkali light chain subunits (MLC) and 2 regulatory light chain subunits (MLC-2). Associates with elmoA. Post-translationally, phosphorylation inhibits thick filament formation and reduces the actin-activated ATPase activity.

It localises to the cytoplasm. Its subcellular location is the cell cortex. Myosin is a protein that binds to actin and has ATPase activity that is activated by actin. The polypeptide is Myosin-2 heavy chain (mhcA) (Dictyostelium discoideum (Social amoeba)).